Reading from the N-terminus, the 428-residue chain is Enolase (428 aa).

Gln163 lines the (2R)-2-phosphoglycerate pocket. Glu205 (proton donor) is an active-site residue. Positions 243, 286, and 313 each coordinate Mg(2+). (2R)-2-phosphoglycerate contacts are provided by Lys338, Arg367, Ser368, and Lys389. The Proton acceptor role is filled by Lys338.

This sequence belongs to the enolase family. The cofactor is Mg(2+).

The protein localises to the cytoplasm. It is found in the secreted. Its subcellular location is the cell surface. It catalyses the reaction (2R)-2-phosphoglycerate = phosphoenolpyruvate + H2O. The protein operates within carbohydrate degradation; glycolysis; pyruvate from D-glyceraldehyde 3-phosphate: step 4/5. Functionally, catalyzes the reversible conversion of 2-phosphoglycerate (2-PG) into phosphoenolpyruvate (PEP). It is essential for the degradation of carbohydrates via glycolysis. The chain is Enolase from Polaromonas naphthalenivorans (strain CJ2).